The primary structure comprises 479 residues: Protein TRIGALACTOSYLDIACYLGLYCEROL 4, chloroplastic (479 aa).

A membrane pass occupies residues 288-310 (VFLSSPHVAVSGIIGSVMTAAFG).

Homodimer. Forms dimeric beta-barrel. Interacts with TGD5.

It localises to the plastid. The protein resides in the chloroplast outer membrane. It is found in the endoplasmic reticulum. In terms of biological role, involved in lipid transfer from the endoplasmic reticulum (ER) to plastids. Specifically binds phosphatidic acid (PtdOH). The chain is Protein TRIGALACTOSYLDIACYLGLYCEROL 4, chloroplastic from Arabidopsis thaliana (Mouse-ear cress).